Consider the following 609-residue polypeptide: UvrABC system protein C (609 aa).

Residues 16–94 (SSPGVYRMYD…IKQYMPKYNV (79 aa)) enclose the GIY-YIG domain. Positions 203-238 (HQVMSVLVGKMEQAASDMRYEQAALYRDQITALRRV) constitute a UVR domain.

It belongs to the UvrC family. Interacts with UvrB in an incision complex.

It is found in the cytoplasm. Functionally, the UvrABC repair system catalyzes the recognition and processing of DNA lesions. UvrC both incises the 5' and 3' sides of the lesion. The N-terminal half is responsible for the 3' incision and the C-terminal half is responsible for the 5' incision. This chain is UvrABC system protein C, found in Shewanella halifaxensis (strain HAW-EB4).